A 62-amino-acid polypeptide reads, in one-letter code: Large ribosomal subunit protein bL28 (62 aa).

It belongs to the bacterial ribosomal protein bL28 family.

The chain is Large ribosomal subunit protein bL28 from Phytoplasma mali (strain AT).